A 207-amino-acid chain; its full sequence is Succinyl-CoA:3-ketoacid coenzyme A transferase subunit B (207 aa).

Residue Glu-43 is part of the active site.

The protein belongs to the 3-oxoacid CoA-transferase subunit B family. In terms of assembly, heterodimer of a subunit A and a subunit B.

The catalysed reaction is a 3-oxo acid + succinyl-CoA = a 3-oxoacyl-CoA + succinate. In Helicobacter pylori (strain J99 / ATCC 700824) (Campylobacter pylori J99), this protein is Succinyl-CoA:3-ketoacid coenzyme A transferase subunit B (scoB).